The primary structure comprises 102 residues: PqqA binding protein (102 aa).

This sequence belongs to the PqqD family. As to quaternary structure, monomer. Interacts with PqqE.

The protein operates within cofactor biosynthesis; pyrroloquinoline quinone biosynthesis. Functionally, functions as a PqqA binding protein and presents PqqA to PqqE, in the pyrroloquinoline quinone (PQQ) biosynthetic pathway. This is PqqA binding protein from Rhodopseudomonas palustris (strain ATCC BAA-98 / CGA009).